Reading from the N-terminus, the 203-residue chain is Recombination protein RecR (203 aa).

The C4-type zinc finger occupies 57 to 73; it reads CQSCGTLKSNSLGCNNC. The 95-residue stretch at 81–175 folds into the Toprim domain; the sequence is NKICVVEDIA…KVTKLAQGLP (95 aa).

This sequence belongs to the RecR family.

In terms of biological role, may play a role in DNA repair. It seems to be involved in an RecBC-independent recombinational process of DNA repair. It may act with RecF and RecO. This is Recombination protein RecR from Pelagibacter ubique (strain HTCC1062).